The sequence spans 331 residues: DNA-directed RNA polymerase subunit alpha (331 aa).

Residues 1 to 225 (MLDIAMPKLE…QYSSIIADFN (225 aa)) form an alpha N-terminal domain (alpha-NTD) region. Positions 243–331 (PSEIYDMPIE…AARLNDGSAE (89 aa)) are alpha C-terminal domain (alpha-CTD).

Belongs to the RNA polymerase alpha chain family. Homodimer. The RNAP catalytic core consists of 2 alpha, 1 beta, 1 beta' and 1 omega subunit. When a sigma factor is associated with the core the holoenzyme is formed, which can initiate transcription.

The enzyme catalyses RNA(n) + a ribonucleoside 5'-triphosphate = RNA(n+1) + diphosphate. In terms of biological role, DNA-dependent RNA polymerase catalyzes the transcription of DNA into RNA using the four ribonucleoside triphosphates as substrates. This chain is DNA-directed RNA polymerase subunit alpha, found in Herpetosiphon aurantiacus (strain ATCC 23779 / DSM 785 / 114-95).